The following is a 247-amino-acid chain: MRNIKLIIEYDGTAYCGWQVQPNGRTVQEALEEALASMLGGKTALHGSGRTDAGVHARGMVACFQTDKGMPLRAFREGLNCLLPADIAVREACEVPLEFHPRFDALAKHYRYTMLLDDLRSPLSRLTAWRLKGKLDVDAMRSACAAFVGEHDFAAFRASNCAAKTTVRRIYSMDLVQEGPFLHLDVKGSGFLKNMVRIITGTLIEVGQGKKSVEDVARLLKGSDRQQNSGMTVPPQGLCLMQVYYPE.

The active-site Nucleophile is Asp52. Tyr110 is a binding site for substrate.

Belongs to the tRNA pseudouridine synthase TruA family. In terms of assembly, homodimer.

It catalyses the reaction uridine(38/39/40) in tRNA = pseudouridine(38/39/40) in tRNA. Formation of pseudouridine at positions 38, 39 and 40 in the anticodon stem and loop of transfer RNAs. The sequence is that of tRNA pseudouridine synthase A from Geobacter sp. (strain M21).